Here is a 71-residue protein sequence, read N- to C-terminus: DNA-directed RNA polymerase subunit omega (71 aa).

Belongs to the RNA polymerase subunit omega family. As to quaternary structure, the RNAP catalytic core consists of 2 alpha, 1 beta, 1 beta' and 1 omega subunit. When a sigma factor is associated with the core the holoenzyme is formed, which can initiate transcription.

The catalysed reaction is RNA(n) + a ribonucleoside 5'-triphosphate = RNA(n+1) + diphosphate. Functionally, promotes RNA polymerase assembly. Latches the N- and C-terminal regions of the beta' subunit thereby facilitating its interaction with the beta and alpha subunits. The sequence is that of DNA-directed RNA polymerase subunit omega from Aromatoleum aromaticum (strain DSM 19018 / LMG 30748 / EbN1) (Azoarcus sp. (strain EbN1)).